Consider the following 207-residue polypeptide: FMN-dependent NADH:quinone oxidoreductase 3 (207 aa).

FMN is bound by residues Ser-10 and 16–18 (SIS).

Belongs to the azoreductase type 1 family. As to quaternary structure, homodimer. FMN is required as a cofactor.

The catalysed reaction is 2 a quinone + NADH + H(+) = 2 a 1,4-benzosemiquinone + NAD(+). The enzyme catalyses N,N-dimethyl-1,4-phenylenediamine + anthranilate + 2 NAD(+) = 2-(4-dimethylaminophenyl)diazenylbenzoate + 2 NADH + 2 H(+). Quinone reductase that provides resistance to thiol-specific stress caused by electrophilic quinones. Its function is as follows. Also exhibits azoreductase activity. Catalyzes the reductive cleavage of the azo bond in aromatic azo compounds to the corresponding amines. The protein is FMN-dependent NADH:quinone oxidoreductase 3 of Burkholderia lata (strain ATCC 17760 / DSM 23089 / LMG 22485 / NCIMB 9086 / R18194 / 383).